Consider the following 263-residue polypeptide: Hydroxyethylthiazole kinase (263 aa).

Substrate is bound at residue Met-41. 2 residues coordinate ATP: Arg-117 and Ser-163. Gly-190 contributes to the substrate binding site.

It belongs to the Thz kinase family. Requires Mg(2+) as cofactor.

The catalysed reaction is 5-(2-hydroxyethyl)-4-methylthiazole + ATP = 4-methyl-5-(2-phosphooxyethyl)-thiazole + ADP + H(+). It functions in the pathway cofactor biosynthesis; thiamine diphosphate biosynthesis; 4-methyl-5-(2-phosphoethyl)-thiazole from 5-(2-hydroxyethyl)-4-methylthiazole: step 1/1. Functionally, catalyzes the phosphorylation of the hydroxyl group of 4-methyl-5-beta-hydroxyethylthiazole (THZ). This is Hydroxyethylthiazole kinase from Lactiplantibacillus plantarum (strain ATCC BAA-793 / NCIMB 8826 / WCFS1) (Lactobacillus plantarum).